The sequence spans 803 residues: MKGSDATLLSFQLLDVSYEMRGSTPVIILWGRGADGSRVVVFYGEFRPYFYVLPDGSVGLDQLAAMIRRLSRPSSPILSVERVRRRFIGREVEALKVTTLVPASVREYREAVRRLGGVRDVLEADIPFALRFIIDFNLYPMRWYVAEVREVAVPHGYSVDRAYTLSGDIREDETRIQEDPLKGLRVMAFDIEVYSKMRTPDPKKDPVIMIGLQQAGGEIEILEAEDRSDKKVIAGFVERVKSIDPDVIVGYNQNRFDWPYLVERARVLGVKLAVGRRSVEPQPGLYGHYSVSGRLNVDLLDFAEELHEVKVKTLEEVADYLGVVKIGERVTLEWWQIGEYWDDPSKREILRKYLRDDVRSTMGLAEKFLPFGAELSQVSGLPLDQVMAASVGFRLEWRLIREAAKLGELVPNRVERSEGRYAGAIVLRPKPGVHEDIAVLDFASMYPNIMVKYNVGPDTLVRPGEEYGEEEVYTAPEVGHKFRKSPPGFFKKILERFLSWRRQIRSEMKKHPPDSPEYKLLDERQKAIKLLANASYGYMGWPHARWYCRECAEAVTAWGRSIIRTAIRKAGELGLEVIYGDTDSLFVKNDPEKVERLIRFVEEELGFDIKVDKVYRRVFFTEAKKRYVGLTVDGKIDVVGFEAVRGDWSELAKETQFKVAEIVLKTGSVDEAVDYVRNIIEKLRRGQVDMRKLVIWKTLTRPPSMYEARQPHVTAALLMERAGIKVEPGAKIGYVVTKGSGPLYTRAKPYFMASKEEVDVEYYVDKQVVPAALRILQYFGVTEKRLKGGGRQSTLLDFMRRGK.

Belongs to the DNA polymerase type-B family.

It carries out the reaction DNA(n) + a 2'-deoxyribonucleoside 5'-triphosphate = DNA(n+1) + diphosphate. The sequence is that of DNA polymerase 2 (polB) from Aeropyrum pernix (strain ATCC 700893 / DSM 11879 / JCM 9820 / NBRC 100138 / K1).